Here is a 395-residue protein sequence, read N- to C-terminus: Tryptophan synthase beta chain (395 aa).

N6-(pyridoxal phosphate)lysine is present on K86.

Belongs to the TrpB family. In terms of assembly, tetramer of two alpha and two beta chains. Requires pyridoxal 5'-phosphate as cofactor.

The enzyme catalyses (1S,2R)-1-C-(indol-3-yl)glycerol 3-phosphate + L-serine = D-glyceraldehyde 3-phosphate + L-tryptophan + H2O. It participates in amino-acid biosynthesis; L-tryptophan biosynthesis; L-tryptophan from chorismate: step 5/5. The beta subunit is responsible for the synthesis of L-tryptophan from indole and L-serine. In Pseudoalteromonas atlantica (strain T6c / ATCC BAA-1087), this protein is Tryptophan synthase beta chain.